The sequence spans 190 residues: Putative manganese efflux pump MntP (190 aa).

6 consecutive transmembrane segments (helical) span residues 3–23 (MSAT…ASIG), 41–61 (LIFG…GFFA), 62–82 (SQYI…ILGG), 105–127 (LALL…VGLA), 143–163 (ATMI…PILG), and 168–188 (VMGG…HLGY).

Belongs to the MntP (TC 9.B.29) family.

The protein resides in the cell inner membrane. Probably functions as a manganese efflux pump. This is Putative manganese efflux pump MntP from Pectobacterium carotovorum subsp. carotovorum (strain PC1).